A 229-amino-acid chain; its full sequence is Uracil-DNA glycosylase (229 aa).

Residue aspartate 70 is the Proton acceptor of the active site.

Belongs to the uracil-DNA glycosylase (UDG) superfamily. UNG family.

Its subcellular location is the cytoplasm. It carries out the reaction Hydrolyzes single-stranded DNA or mismatched double-stranded DNA and polynucleotides, releasing free uracil.. Excises uracil residues from the DNA which can arise as a result of misincorporation of dUMP residues by DNA polymerase or due to deamination of cytosine. The polypeptide is Uracil-DNA glycosylase (Chlamydia trachomatis serovar A (strain ATCC VR-571B / DSM 19440 / HAR-13)).